The sequence spans 417 residues: MGTQKPRILPWLISQLDRGELEGVAWLGESRTRFRIPWKHGLRQDAQQEDFGIFQAWAVASGAYTPGKDKPDLPTWKRNFRSALNRKEVLRLAEDHSKDSQDPHKIYEFVNSGVRDIPEPDTSQDNGRHNTSDTQEDTLEKLLSDMDLSPGGPSNLTMASEKPPQFLQSPDSDIPALCPNSGLSENPLKQLLANEEDWEFEVTAFYRGCQVFQQTVFCPGGLRLVGSEAGDRMLPGQPIRLPDPATSLTDKSVTDYVQRVLSCLGGGLALWRAGQWLCAQRLGHCHVYWAIGEELLPSCGHKPDGEVPKDREGGVFNLGPFITDLITFIEGSRRSPLYTLWFCVGQSWPQDQPWIKRLVMVKVVPMCLRVLVDIARQGGASSLENTVDLHISNSDPLSLTPDQYMACLQDLAEDMDF.

A Phosphothreonine modification is found at threonine 3. Residues 5 to 111 constitute a DNA-binding region (IRF tryptophan pentad repeat); that stretch reads KPRILPWLIS…DPHKIYEFVN (107 aa). Position 14 is a phosphoserine (serine 14). Position 75 is a phosphothreonine (threonine 75). Residues serine 97 and serine 123 each carry the phosphoserine modification. Disordered regions lie at residues 111 to 134 and 147 to 170; these read NSGVRDIPEPDTSQDNGRHNTSDT and DLSPGGPSNLTMASEKPPQFLQSP. The tract at residues 140 to 417 is mediates interaction with ZDHHC11; it reads EKLLSDMDLS…LQDLAEDMDF (278 aa). Position 184 is a phosphoserine (serine 184). Lysine 189 participates in a covalent cross-link: Glycyl lysine isopeptide (Lys-Gly) (interchain with G-Cter in ISG15). Positions 196–356 are interaction with HERC5; that stretch reads EDWEFEVTAF…SWPQDQPWIK (161 aa). The residue at position 249 (threonine 249) is a Phosphothreonine. Residues cysteine 263 and cysteine 285 are joined by a disulfide bond. Glycyl lysine isopeptide (Lys-Gly) (interchain with G-Cter in ISG15) cross-links involve residues lysine 356 and lysine 362. Residue lysine 362 is modified to N6-acetyllysine. Position 381 is a phosphoserine (serine 381). Serine 382 carries the post-translational modification Diphosphoserine. Serine 382 is modified (phosphoserine; by TBK1). The residue at position 392 (serine 392) is a Phosphoserine; by IKKE. A Phosphoserine modification is found at serine 394. Threonine 400 carries the post-translational modification Phosphothreonine.

It belongs to the IRF family. In terms of assembly, monomer. Homodimer; phosphorylation-induced. Interacts (when phosphorylated) with CREBBP. Interacts with MAVS (via phosphorylated pLxIS motif). Interacts with TICAM1 (via phosphorylated pLxIS motif). Interacts with STING1 (via phosphorylated pLxIS motif). Interacts with IKBKE and TBK1. Interacts with TICAM2. Interacts with RBCK1. Interacts with HERC5. Interacts with DDX3X; the interaction allows the phosphorylation and activation of IRF3 by IKBKE. Interacts with TRIM21 and ULK1, in the presence of TRIM21; this interaction leads to IRF3 degradation by autophagy. Interacts with RIOK3; RIOK3 probably mediates the interaction of TBK1 with IRF3. Interacts with ILRUN; the interaction inhibits IRF3 binding to its DNA consensus sequence. Interacts with LYAR; this interaction impairs IRF3 DNA-binding activity. Interacts with TRAF3. Interacts with ZDHHC11; ZDHHC11 recruits IRF3 to STING1 upon DNA virus infection and thereby promotes IRF3 activation. Interacts with HSP90AA1; the interaction mediates IRF3 association with TOMM70. Interacts with BCL2; the interaction decreases upon Sendai virus infection. Interacts with BAX; the interaction is direct, increases upon virus infection and mediates the formation of the apoptosis complex TOMM70:HSP90AA1:IRF3:BAX. Interacts with DDX56. Interacts with NBR1. Constitutively phosphorylated on many Ser/Thr residues. Activated following phosphorylation by TBK1 and IKBKE. Innate adapter proteins, such as MAVS, STING1 or TICAM1, are first activated by viral RNA, cytosolic DNA, and bacterial lipopolysaccharide (LPS), respectively, leading to activation of the kinases TBK1 and IKBKE. These kinases then phosphorylate the adapter proteins on the pLxIS motif, leading to recruitment of IRF3, thereby licensing IRF3 for phosphorylation by TBK1. Phosphorylation at Ser-382 is followed by pyrophosphorylation at the same residue, promoting phosphorylation at Ser-392. Phosphorylated IRF3 dissociates from the adapter proteins, dimerizes, and then enters the nucleus to induce IFNs. In terms of processing, pyrophosphorylated by UAP1 following phosphorylation at Ser-382 by TBK1. Pyrophosphorylation promotes subsequent phosphorylation at Ser-392, leading to homodimerization of IRF3. Post-translationally, acetylation at Lys-362 by KAT8 inhibits recruimtent to promoters and transcription factor activity. Acetylation by KAT8 is promoted by phosphorylation at Ser-392. Ubiquitinated; ubiquitination involves RBCK1 leading to proteasomal degradation. Polyubiquitinated; ubiquitination involves TRIM21 leading to proteasomal degradation. Ubiquitinated by UBE3C, leading to its degradation. Deubiquitinated by USP5 on both 'Lys-48'-linked unanchored and 'Lys-63'-linked anchored polyubiquitin, leading to inhibition of anti-RNA viral innate immunity. In terms of processing, ISGylated by HERC5 resulting in sustained IRF3 activation and in the inhibition of IRF3 ubiquitination by disrupting PIN1 binding. The phosphorylation state of IRF3 does not alter ISGylation. Post-translationally, proteolytically cleaved by apoptotic caspases during apoptosis, leading to its inactivation. Cleavage by CASP3 during virus-induced apoptosis inactivates it, preventing cytokine overproduction.

Its subcellular location is the cytoplasm. It is found in the nucleus. The protein localises to the mitochondrion. Its activity is regulated as follows. In the absence of viral infection, maintained as a monomer in an autoinhibited state. Phosphorylation by TBK1 and IKBKE disrupts this autoinhibition leading to the liberation of the DNA-binding and dimerization activities and its nuclear localization where it can activate type I IFN and ISG genes. Phosphorylation and activation follow the following steps: innate adapter proteins, such as MAVS, STING1 or TICAM1, are first activated by viral RNA, cytosolic DNA and bacterial lipopolysaccharide (LPS), respectively, leading to activation of the kinases TBK1 and IKBKE. These kinases then phosphorylate the adapter proteins on their pLxIS motif, leading to recruitment of IRF3, thereby licensing IRF3 for phosphorylation by TBK1. Phosphorylated IRF3 dissociates from the adapter proteins, dimerizes, and then enters the nucleus to induce IFNs. Its function is as follows. Key transcriptional regulator of type I interferon (IFN)-dependent immune responses which plays a critical role in the innate immune response against DNA and RNA viruses. Regulates the transcription of type I IFN genes (IFN-alpha and IFN-beta) and IFN-stimulated genes (ISG) by binding to an interferon-stimulated response element (ISRE) in their promoters. Acts as a more potent activator of the IFN-beta (IFNB) gene than the IFN-alpha (IFNA) gene and plays a critical role in both the early and late phases of the IFNA/B gene induction. Found in an inactive form in the cytoplasm of uninfected cells and following viral infection, double-stranded RNA (dsRNA), or toll-like receptor (TLR) signaling, is phosphorylated by IKBKE and TBK1 kinases. This induces a conformational change, leading to its dimerization and nuclear localization and association with CREB binding protein (CREBBP) to form dsRNA-activated factor 1 (DRAF1), a complex which activates the transcription of the type I IFN and ISG genes. Can activate distinct gene expression programs in macrophages and can induce significant apoptosis in primary macrophages. This chain is Interferon regulatory factor 3 (IRF3), found in Bos taurus (Bovine).